The following is a 684-amino-acid chain: Phenoloxidase 2 (684 aa).

Residues 1 to 50 (MADKKNLLLLFDHPTEPVFMDKGKRVTVFDVPDSFLTDRYRPISNEVQSR) constitute a propeptide that is removed on maturation. Residues H208, H212, and H238 each contribute to the Cu cation site. E350 (proton acceptor) is an active-site residue. 3 residues coordinate Cu cation: H365, H369, and H405. 2 N-linked (GlcNAc...) asparagine glycosylation sites follow: N448 and N492. Disulfide bonds link C581–C623 and C583–C630. N665 and N677 each carry an N-linked (GlcNAc...) asparagine glycan.

Belongs to the tyrosinase family. The cofactor is Cu(2+). Post-translationally, upon activation, a trypsin type protease cleaves prophenol oxidase to yield the active enzyme.

The protein localises to the secreted. It catalyses the reaction 2 L-dopa + O2 = 2 L-dopaquinone + 2 H2O. It carries out the reaction L-tyrosine + O2 = L-dopaquinone + H2O. Functionally, this is a copper-containing oxidase that functions in the formation of pigments such as melanins and other polyphenolic compounds. Catalyzes the rate-limiting conversions of tyrosine to DOPA, DOPA to DOPA-quinone and possibly 5,6 dihydroxyindole to indole-5'6 quinonee. This Drosophila melanogaster (Fruit fly) protein is Phenoloxidase 2 (PPO2).